The primary structure comprises 533 residues: Di/tripeptide-binding protein 3 (533 aa).

An N-terminal signal peptide occupies residues 1–24 (MRKILPLRAWLAAGLILGSPFSHA).

It belongs to the bacterial solute-binding protein 5 family. As to quaternary structure, the complex is composed of two ATP-binding proteins (DppD and DppF), two transmembrane proteins (DppB and DppC) and a solute-binding protein (DppA3). Five orthologous SBPs (DppA1-A5) are present in P.aeruginosa, which increases the substrate specificity of the DppBCDF transporter.

Part of the ABC transporter DppABCDF involved in the uptake of various di/tripeptides. Prefers dipeptides with acidic residues at the C-terminal end. Involved in the uptake of phaseolotoxin, a toxic tripeptide inhibiting the enzyme ornithine carbamoyltransferase. The polypeptide is Di/tripeptide-binding protein 3 (Pseudomonas aeruginosa (strain UCBPP-PA14)).